A 511-amino-acid chain; its full sequence is 2-isopropylmalate synthase (511 aa).

The 263-residue stretch at 5–267 (LIIFDTTLRD…DTNIDTMHIL (263 aa)) folds into the Pyruvate carboxyltransferase domain. Positions 14, 202, 204, and 238 each coordinate Mn(2+). Residues 393–511 (KLVSLKVCTE…TVTNKAHPQI (119 aa)) form a regulatory domain region.

Belongs to the alpha-IPM synthase/homocitrate synthase family. LeuA type 1 subfamily. In terms of assembly, homodimer. The cofactor is Mn(2+).

Its subcellular location is the cytoplasm. It carries out the reaction 3-methyl-2-oxobutanoate + acetyl-CoA + H2O = (2S)-2-isopropylmalate + CoA + H(+). It functions in the pathway amino-acid biosynthesis; L-leucine biosynthesis; L-leucine from 3-methyl-2-oxobutanoate: step 1/4. Catalyzes the condensation of the acetyl group of acetyl-CoA with 3-methyl-2-oxobutanoate (2-ketoisovalerate) to form 3-carboxy-3-hydroxy-4-methylpentanoate (2-isopropylmalate). This Vesicomyosocius okutanii subsp. Calyptogena okutanii (strain HA) protein is 2-isopropylmalate synthase.